The sequence spans 355 residues: Peptide chain release factor 1 (355 aa).

An N5-methylglutamine modification is found at glutamine 231. Positions 281-291 are enriched in basic and acidic residues; the sequence is ERLAKESEARK. Positions 281-302 are disordered; the sequence is ERLAKESEARKSQVGSGDRSER.

Belongs to the prokaryotic/mitochondrial release factor family. In terms of processing, methylated by PrmC. Methylation increases the termination efficiency of RF1.

The protein resides in the cytoplasm. In terms of biological role, peptide chain release factor 1 directs the termination of translation in response to the peptide chain termination codons UAG and UAA. The chain is Peptide chain release factor 1 from Campylobacter jejuni subsp. doylei (strain ATCC BAA-1458 / RM4099 / 269.97).